A 30-amino-acid chain; its full sequence is Small toxic protein BsrE (30 aa).

Residues 4 to 24 (FQALMLMLAIGSFIIALLTYI) traverse the membrane as a helical segment.

Its subcellular location is the cell membrane. Functionally, toxic component of a type I toxin-antitoxin (TA) system; overexpression in the absence of cognate antisense antitoxin SR5 RNA leads to cell lysis. Base pairing occurs between the 3' UTRs of bsrE mRNA and SR5 RNA which leads to bsrE mRNA degradation initiated by RNase III (rnc) and RNase J1 (rnjA). Genetic evidence suggests an unidentified RNA-binding protein may exist that promotes TA RNA interaction. This Bacillus subtilis (strain 168) protein is Small toxic protein BsrE.